The chain runs to 253 residues: Uracil-DNA glycosylase (253 aa).

The active-site Proton acceptor is D79.

Belongs to the uracil-DNA glycosylase (UDG) superfamily. UNG family.

The protein localises to the cytoplasm. It catalyses the reaction Hydrolyzes single-stranded DNA or mismatched double-stranded DNA and polynucleotides, releasing free uracil.. In terms of biological role, excises uracil residues from the DNA which can arise as a result of misincorporation of dUMP residues by DNA polymerase or due to deamination of cytosine. The chain is Uracil-DNA glycosylase from Xylella fastidiosa (strain M23).